A 529-amino-acid chain; its full sequence is DnaJ homolog l(2)tid, mitochondrial (529 aa).

The N-terminal 22 residues, 1-22 (MISCKNLCVLRQLPLKNCRRHY), are a transit peptide targeting the mitochondrion. The residue at position 35 (R35) is an Omega-N-methylarginine. The J domain maps to 80-145 (DYYATLGVAK…QKRREYDTYG (66 aa)). Residue K121 is modified to N6-acetyllysine. The CR-type zinc finger occupies 230–308 (GVNKDVNVNV…CEGKGQTVQR (79 aa)). Zn(2+) contacts are provided by C243, C246, C260, C263, C282, C285, C296, and C299. Residues 243–250 (CPKCAGSK) form a CXXCXGXG motif; approximate repeat. One copy of the CXXCXGXG motif repeat lies at 260 to 267 (CQYCNGTG). One copy of the CXXCXGXG motif; approximate repeat lies at 282-289 (CRYCQGTR). A CXXCXGXG motif repeat occupies 296 to 303 (CAECEGKG). Positions 441–529 (TPGQIHGMAQ…FLNKIKSMFN (89 aa)) are disordered. Over residues 497–508 (QSEKSETRRKDQ) the composition is skewed to basic and acidic residues.

Its subcellular location is the mitochondrion outer membrane. Functionally, may act as a tumor suppressor in larval imaginal disks. The polypeptide is DnaJ homolog l(2)tid, mitochondrial (l(2)tid) (Drosophila virilis (Fruit fly)).